The sequence spans 227 residues: Cytochrome c oxidase subunit 2 (227 aa).

The Mitochondrial intermembrane portion of the chain corresponds to 1–14 (MAYPFQLGFQDATS). A helical transmembrane segment spans residues 15 to 45 (PIMEELLHFHDHTLMIVFLISSLVLYIITLM). Residues 46-59 (LTTKLTHTSTMDAQ) lie on the Mitochondrial matrix side of the membrane. A helical transmembrane segment spans residues 60–87 (EVETVWTILPAIILILIALPSLRILYMM). Over 88–227 (DEVNNPSLTV…IFEKWSASML (140 aa)) the chain is Mitochondrial intermembrane. His161, Cys196, Glu198, Cys200, His204, and Met207 together coordinate Cu cation. A Mg(2+)-binding site is contributed by Glu198.

The protein belongs to the cytochrome c oxidase subunit 2 family. In terms of assembly, component of the cytochrome c oxidase (complex IV, CIV), a multisubunit enzyme composed of 14 subunits. The complex is composed of a catalytic core of 3 subunits MT-CO1, MT-CO2 and MT-CO3, encoded in the mitochondrial DNA, and 11 supernumerary subunits COX4I, COX5A, COX5B, COX6A, COX6B, COX6C, COX7A, COX7B, COX7C, COX8 and NDUFA4, which are encoded in the nuclear genome. The complex exists as a monomer or a dimer and forms supercomplexes (SCs) in the inner mitochondrial membrane with NADH-ubiquinone oxidoreductase (complex I, CI) and ubiquinol-cytochrome c oxidoreductase (cytochrome b-c1 complex, complex III, CIII), resulting in different assemblies (supercomplex SCI(1)III(2)IV(1) and megacomplex MCI(2)III(2)IV(2)). Found in a complex with TMEM177, COA6, COX18, COX20, SCO1 and SCO2. Interacts with TMEM177 in a COX20-dependent manner. Interacts with COX20. Interacts with COX16. Requires Cu cation as cofactor.

It is found in the mitochondrion inner membrane. The catalysed reaction is 4 Fe(II)-[cytochrome c] + O2 + 8 H(+)(in) = 4 Fe(III)-[cytochrome c] + 2 H2O + 4 H(+)(out). Component of the cytochrome c oxidase, the last enzyme in the mitochondrial electron transport chain which drives oxidative phosphorylation. The respiratory chain contains 3 multisubunit complexes succinate dehydrogenase (complex II, CII), ubiquinol-cytochrome c oxidoreductase (cytochrome b-c1 complex, complex III, CIII) and cytochrome c oxidase (complex IV, CIV), that cooperate to transfer electrons derived from NADH and succinate to molecular oxygen, creating an electrochemical gradient over the inner membrane that drives transmembrane transport and the ATP synthase. Cytochrome c oxidase is the component of the respiratory chain that catalyzes the reduction of oxygen to water. Electrons originating from reduced cytochrome c in the intermembrane space (IMS) are transferred via the dinuclear copper A center (CU(A)) of subunit 2 and heme A of subunit 1 to the active site in subunit 1, a binuclear center (BNC) formed by heme A3 and copper B (CU(B)). The BNC reduces molecular oxygen to 2 water molecules using 4 electrons from cytochrome c in the IMS and 4 protons from the mitochondrial matrix. The sequence is that of Cytochrome c oxidase subunit 2 (MT-CO2) from Balaenoptera borealis (Sei whale).